Here is a 29-residue protein sequence, read N- to C-terminus: Brevinin-2Ee (29 aa).

Cysteines 23 and 29 form a disulfide.

This sequence belongs to the frog skin active peptide (FSAP) family. Brevinin subfamily. Expressed by the skin glands.

The protein localises to the secreted. Its function is as follows. Shows antibacterial activity against representative Gram-negative and Gram-positive bacterial species, and hemolytic activity. The protein is Brevinin-2Ee of Pelophylax lessonae (Pool frog).